Consider the following 953-residue polypeptide: Serine/threonine-protein kinase ppk30 (953 aa).

Positions 57–326 (VIIQRYLSEG…IYQTLKEIME (270 aa)) constitute a Protein kinase domain. Residues 63 to 71 (LSEGGFSHV) and Lys-85 each bind ATP. The active-site Proton acceptor is the Asp-187. Disordered regions lie at residues 343-402 (ASTY…PSVS), 427-451 (SPIPATKSYSATIQTPRSPSLRRAD), 538-606 (RFLP…NRMN), 641-669 (RKEPFTPAVPSAKSGLKKDQSSEVANKDV), 748-791 (STSQ…RPIG), and 864-953 (RKSC…ESLE). 3 stretches are compositionally biased toward polar residues: residues 355-369 (RTPSGSLTPLSSRPA), 378-402 (TVQTTSSNVPPVNRPSLKSKSPSVS), and 433-444 (KSYSATIQTPRS). Residues 547-557 (PSEFSSSVGSK) show a composition bias toward low complexity. A compositionally biased stretch (polar residues) spans 558–575 (QNLSMDIPSVQNVSTKQK). Basic and acidic residues predominate over residues 656–669 (LKKDQSSEVANKDV). Over residues 748–766 (STSQVSHTQRLQQSISTSL) the composition is skewed to polar residues. Composition is skewed to basic and acidic residues over residues 767 to 778 (ERVKSNTKKESN), 865 to 884 (KSCETQRSRKSHEGSNDLER), and 937 to 953 (PHIERLNLFHTKSESLE). Ser-872 and Ser-875 each carry phosphoserine.

This sequence belongs to the protein kinase superfamily. Ser/Thr protein kinase family.

It localises to the cytoplasm. The catalysed reaction is L-seryl-[protein] + ATP = O-phospho-L-seryl-[protein] + ADP + H(+). The enzyme catalyses L-threonyl-[protein] + ATP = O-phospho-L-threonyl-[protein] + ADP + H(+). In Schizosaccharomyces pombe (strain 972 / ATCC 24843) (Fission yeast), this protein is Serine/threonine-protein kinase ppk30 (ppk30).